Here is a 344-residue protein sequence, read N- to C-terminus: [LysW]-L-2-aminoadipate 6-phosphate reductase (344 aa).

Residues 12-15, 36-38, and L75 each bind NADP(+); these read SGYA and SRR. C148 is a catalytic residue. NADP(+) is bound by residues S180, A184, and N312.

Belongs to the NAGSA dehydrogenase family. Type 1 subfamily. LysY sub-subfamily. As to quaternary structure, homotetramer. Interacts with LysW. May form a ternary complex with LysW and LysZ.

It is found in the cytoplasm. The catalysed reaction is [amino-group carrier protein]-C-terminal-N-(1-carboxy-5-oxopentan-1-yl)-L-glutamine + phosphate + NADP(+) = [amino-group carrier protein]-C-terminal-N-(1-carboxy-5-phosphooxy-5-oxopentan-1-yl)-L-glutamine + NADPH + H(+). The protein operates within amino-acid biosynthesis; L-lysine biosynthesis via AAA pathway; L-lysine from L-alpha-aminoadipate (Thermus route): step 3/5. In terms of biological role, catalyzes the NADPH-dependent reduction of [LysW]-aminoadipate 6-phosphate to yield [LysW]-aminoadipate 6-semialdehyde. The polypeptide is [LysW]-L-2-aminoadipate 6-phosphate reductase (Thermus thermophilus (strain ATCC BAA-163 / DSM 7039 / HB27)).